The chain runs to 457 residues: Multidrug resistance protein MdtK (457 aa).

A run of 12 helical transmembrane segments spans residues 11-31, 46-66, 93-113, 127-147, 160-180, 188-208, 243-263, 283-301, 316-336, 357-377, 387-407, and 418-438; these read LLAL…MGVV, AVAV…GLLL, WLAL…DHVI, AVGF…FQVL, GMVI…IFIY, LGGV…FLMM, LPVA…ALLV, LMFM…RVGF, YTSM…TIVF, LMLL…GSGV, IFFI…YLLG, and PAGF…LMVL.

Belongs to the multi antimicrobial extrusion (MATE) (TC 2.A.66.1) family. MdtK subfamily.

Its subcellular location is the cell inner membrane. Functionally, multidrug efflux pump that functions probably as a Na(+)/drug antiporter. This Yersinia pseudotuberculosis serotype IB (strain PB1/+) protein is Multidrug resistance protein MdtK.